The chain runs to 83 residues: Homeobox protein DLX-2 (83 aa).

Residues 1 to 14 (STATDSSYYTNQQH) show a composition bias toward polar residues. Disordered regions lie at residues 1-27 (STAT…SPYA) and 63-83 (PYGT…LEPE).

This sequence belongs to the distal-less homeobox family. As to quaternary structure, interacts (via homeobox DNA-binding domain) with POU4F2; this interaction enhances retinal ganglion cell (RGC) differentiation.

It localises to the nucleus. Its function is as follows. Acts as a transcriptional activator. Activates transcription of CGA/alpha-GSU, via binding to the downstream activin regulatory element (DARE) in the gene promoter. Plays a role in terminal differentiation of interneurons, such as amacrine and bipolar cells in the developing retina. Likely to play a regulatory role in the development of the ventral forebrain. May play a role in craniofacial patterning and morphogenesis. The sequence is that of Homeobox protein DLX-2 (Dlx2) from Rattus norvegicus (Rat).